Consider the following 481-residue polypeptide: Two-component response regulator ORR32 (481 aa).

The region spanning 13-138 (HVMLVDDDTK…TIALWRVVAW (126 aa)) is the Response regulatory domain. Aspartate 66 is subject to 4-aspartylphosphate.

The protein belongs to the ARR family. Type-B subfamily. In terms of processing, two-component system major event consists of a His-to-Asp phosphorelay between a sensor histidine kinase (HK) and a response regulator (RR). In plants, the His-to-Asp phosphorelay involves an additional intermediate named Histidine-containing phosphotransfer protein (HPt). This multistep phosphorelay consists of a His-Asp-His-Asp sequential transfer of a phosphate group between first a His and an Asp of the HK protein, followed by the transfer to a conserved His of the HPt protein and finally the transfer to an Asp in the receiver domain of the RR protein.

Its function is as follows. Functions as a response regulator involved in His-to-Asp phosphorelay signal transduction system. Phosphorylation of the Asp residue in the receiver domain activates the ability of the protein to promote the transcription of target genes. May directly activate some type-A response regulators in response to cytokinins. The chain is Two-component response regulator ORR32 from Oryza sativa subsp. japonica (Rice).